Here is a 232-residue protein sequence, read N- to C-terminus: 5'-methylthioadenosine/S-adenosylhomocysteine nucleosidase (232 aa).

Residue Glu12 is the Proton acceptor of the active site. Residues Gly78, Met153, and 174 to 175 contribute to the substrate site; that span reads ME. Asp198 acts as the Proton donor in catalysis.

Belongs to the PNP/UDP phosphorylase family. MtnN subfamily.

The catalysed reaction is S-adenosyl-L-homocysteine + H2O = S-(5-deoxy-D-ribos-5-yl)-L-homocysteine + adenine. The enzyme catalyses S-methyl-5'-thioadenosine + H2O = 5-(methylsulfanyl)-D-ribose + adenine. It carries out the reaction 5'-deoxyadenosine + H2O = 5-deoxy-D-ribose + adenine. Its pathway is amino-acid biosynthesis; L-methionine biosynthesis via salvage pathway; S-methyl-5-thio-alpha-D-ribose 1-phosphate from S-methyl-5'-thioadenosine (hydrolase route): step 1/2. In terms of biological role, catalyzes the irreversible cleavage of the glycosidic bond in both 5'-methylthioadenosine (MTA) and S-adenosylhomocysteine (SAH/AdoHcy) to adenine and the corresponding thioribose, 5'-methylthioribose and S-ribosylhomocysteine, respectively. Also cleaves 5'-deoxyadenosine, a toxic by-product of radical S-adenosylmethionine (SAM) enzymes, into 5-deoxyribose and adenine. The chain is 5'-methylthioadenosine/S-adenosylhomocysteine nucleosidase from Hydrogenovibrio crunogenus (strain DSM 25203 / XCL-2) (Thiomicrospira crunogena).